We begin with the raw amino-acid sequence, 768 residues long: Cullin-3 (768 aa).

N-acetylserine is present on Ser2. Residues 2-41 are interaction with KLHL18; it reads SNLSKGTGSRKDTKMRIRAFPMTMDEKYVNSIWDLLKNAI. At Ser585 the chain carries Phosphoserine. Residues 677-698 are disordered; it reads VAAKQGESDPERKETRQKVDDD. Residues 682 to 698 show a composition bias toward basic and acidic residues; the sequence is GESDPERKETRQKVDDD. The 63-residue stretch at 698–760 folds into the Cullin neddylation domain; the sequence is DRKHEIEAAI…REYLARTPED (63 aa). Lys712 is covalently cross-linked (Glycyl lysine isopeptide (Lys-Gly) (interchain with G-Cter in NEDD8)).

The protein belongs to the cullin family. In terms of assembly, forms neddylation-dependent homodimers. Component of multiple BCR (BTB-CUL3-RBX1) E3 ubiquitin-protein ligase complexes formed of CUL3, RBX1 and a variable BTB domain-containing protein acting as both, adapter to cullin and substrate recognition subunit. The BCR complex may be active as a heterodimeric complex, in which NEDD8, covalently attached to one CUL3 molecule, binds to the C-terminus of a second CUL3 molecule. Interacts with RBX1, RNF7 and TIP120A/CAND1. Part of the BCR(SPOP) containing SPOP, and of BCR containing homodimeric SPOPL or the heterodimer formed by SPOP and SPOPL. Part of the probable BCR(KLHL9-KLHL13) complex with BTB domain proteins KLHL9 and KLHL13. Part of the BCR(KLHL41) complex containing KLHL41. Component of the BCR(KLHL12) E3 ubiquitin ligase complex, at least composed of CUL3 and KLHL12 and RBX1. Component of the BCR(KLHL3) E3 ubiquitin ligase complex, at least composed of CUL3 and KLHL3 and RBX1. Part of the BCR(ENC1) complex containing ENC1. Part of a complex consisting of BMI1/PCGF4, CUL3 and SPOP. Part of a complex consisting of BRMS1, CUL3 and SPOP. Component of the BCR(KLHL21) E3 ubiquitin ligase complex, at least composed of CUL3, KLHL21 and RBX1. Component of the BCR(KLHL22) E3 ubiquitin ligase complex, at least composed of CUL3, KLHL22 and RBX1. Component of the BCR(KLHL25) E3 ubiquitin ligase complex, at least composed of CUL3, KLHL25 and RBX1. Part of a complex consisting of MACROH2A1, CUL3 and SPOP. Component of the BCR(KLHL42) E3 ubiquitin ligase complex, at least composed of CUL3 and KLHL42. Component of the BCR(KBTBD8) E3 ubiquitin ligase complex, at least composed of CUL3, KBTBD8 and RBX1. Interacts with KLHL42 (via the BTB domain). Interacts with KATNA1; the interaction is enhanced by KLHL42. Interacts with KCTD5, KLHL9, KLHL11, KLHL13, GAN, ZBTB16, KLHL3, KLHL15, KLHL20, KLHL36, GMCL2, BTBD1. Part of a complex that contains CUL3, RBX1 and GAN. Interacts (via BTB domain) with KLHL17; the interaction regulates surface GRIK2 expression. Interacts with KCTD7. Part of the BCR(GAN) complex containing GAN. Part of the BCR(KEAP1) complex containing KEAP1. Interacts with KAT5 and ATF2. Interacts with KCTD17 in the BCR(KCTD17) E3 ubiquitin ligase complex, at least composed of CUL3, KCTD17 and RBX1. Interacts (when neddylated) with ARIH1; leading to activate the E3 ligase activity of ARIH1. Interacts with COPS9. Interacts with PPP2R5B; this interaction is indirect and mediated through KLHL15-binding and leads to PPP2R5B proteasomal degradation. Interacts with RBBP8/CtIP; this interaction is indirect and mediated through KLHL15-binding and leads to RBBP8 proteasomal degradation. Interacts with KLHL24 in the BCR(KLHL24) E3 ubiquitin ligase complex, composed of CUL3, RBX1 and KLHL24. Interacts with RHOBTB2. Interacts with CYCE. Interacts with KLHL10. Interacts with AURKA and KLHL18 (via BTB domain). Interacts (unneddylated form) with DCUN1D1, DCUN1D2, DCUN1D3, DCUN1D4 and DCUN1D5; these interactions promote the cullin neddylation. Component of a BCR3 (BTB-CUL3-RBX1) E3 ubiquitin ligase complex, also named Cul3-RING ubiquitin ligase complex CUL3(KBTBD6/7), composed of CUL3, RBX1, KBTBD6 and KBTBD7. Component of the BCR(KBTBD2) E3 ubiquitin ligase complex, at least composed of CUL3, KBTBD2 and RBX1. Interacts with KBTBD2 (via the BTB domain). Component of the BCR(KBTBD4) E3 ubiquitin ligase complex, at least composed of CUL3, KBTBD4 and RBX1. Neddylated. Attachment of NEDD8 is required for the E3 ubiquitin-protein ligase activity of the BCR complex. Deneddylated via its interaction with the COP9 signalosome (CSN) complex. As to expression, widely expressed, with highest expression in brain, spleen and testis. In the testis, it is mainly expressed in spermatids.

The protein resides in the nucleus. The protein localises to the golgi apparatus. It localises to the cell projection. Its subcellular location is the cilium. It is found in the flagellum. The protein resides in the cytoplasm. The protein localises to the cytoskeleton. It localises to the spindle. Its subcellular location is the microtubule organizing center. It is found in the centrosome. The protein resides in the spindle pole. It functions in the pathway protein modification; protein ubiquitination. Core component of multiple cullin-RING-based BCR (BTB-CUL3-RBX1) E3 ubiquitin-protein ligase complexes which mediate the ubiquitination and subsequent proteasomal degradation of target proteins. BCR complexes and ARIH1 collaborate in tandem to mediate ubiquitination of target proteins. As a scaffold protein may contribute to catalysis through positioning of the substrate and the ubiquitin-conjugating enzyme. The E3 ubiquitin-protein ligase activity of the complex is dependent on the neddylation of the cullin subunit and is inhibited by the association of the deneddylated cullin subunit with TIP120A/CAND1. The functional specificity of the BCR complex depends on the BTB domain-containing protein as the substrate recognition component. BCR(KLHL42) is involved in ubiquitination of KATNA1. BCR(SPOP) is involved in ubiquitination of BMI1/PCGF4, BRMS1, MACROH2A1 and DAXX, GLI2 and GLI3. Can also form a cullin-RING-based BCR (BTB-CUL3-RBX1) E3 ubiquitin-protein ligase complex containing homodimeric SPOPL or the heterodimer formed by SPOP and SPOPL; these complexes have lower ubiquitin ligase activity. BCR(KLHL9-KLHL13) controls the dynamic behavior of AURKB on mitotic chromosomes and thereby coordinates faithful mitotic progression and completion of cytokinesis. BCR(KLHL12) is involved in ER-Golgi transport by regulating the size of COPII coats, thereby playing a key role in collagen export, which is required for embryonic stem (ES) cells division: BCR(KLHL12) acts by mediating monoubiquitination of SEC31 (SEC31A or SEC31B). BCR(KLHL3) acts as a regulator of ion transport in the distal nephron; by mediating ubiquitination of WNK4. The BCR(KLHL20) E3 ubiquitin ligase complex is involved in interferon response and anterograde Golgi to endosome transport: it mediates both ubiquitination leading to degradation and 'Lys-33'-linked ubiquitination. The BCR(KLHL21) E3 ubiquitin ligase complex regulates localization of the chromosomal passenger complex (CPC) from chromosomes to the spindle midzone in anaphase and mediates the ubiquitination of AURKB. The BCR(KLHL22) ubiquitin ligase complex mediates monoubiquitination of PLK1, leading to PLK1 dissociation from phosphoreceptor proteins and subsequent removal from kinetochores, allowing silencing of the spindle assembly checkpoint (SAC) and chromosome segregation. The BCR(KLHL22) ubiquitin ligase complex is also responsible for the amino acid-stimulated 'Lys-48' polyubiquitination and proteasomal degradation of DEPDC5. Through the degradation of DEPDC5, releases the GATOR1 complex-mediated inhibition of the TORC1 pathway. The BCR(KLHL25) ubiquitin ligase complex is involved in translational homeostasis by mediating ubiquitination and subsequent degradation of hypophosphorylated EIF4EBP1 (4E-BP1). The BCR(KLHL25) ubiquitin ligase complex is also involved in lipid synthesis by mediating ubiquitination and degradation of ACLY. The BCR(KBTBD8) complex acts by mediating monoubiquitination of NOLC1 and TCOF1, leading to remodel the translational program of differentiating cells in favor of neural crest specification. Involved in ubiquitination of cyclin E and of cyclin D1 (in vitro) thus involved in regulation of G1/S transition. Involved in the ubiquitination of KEAP1, ENC1 and KLHL41. In concert with ATF2 and RBX1, promotes degradation of KAT5 thereby attenuating its ability to acetylate and activate ATM. The BCR(KCTD17) E3 ubiquitin ligase complex mediates ubiquitination and degradation of TCHP, a down-regulator of cilium assembly, thereby inducing ciliogenesis. The BCR(KLHL24) E3 ubiquitin ligase complex mediates ubiquitination of KRT14, controls KRT14 levels during keratinocytes differentiation, and is essential for skin integrity. The BCR(KLHL18) E3 ubiquitin ligase complex mediates the ubiquitination of AURKA leading to its activation at the centrosome which is required for initiating mitotic entry. The BCR(KEAP1) E3 ubiquitin ligase complex acts as a key sensor of oxidative and electrophilic stress by mediating ubiquitination and degradation of NFE2L2/NRF2, a transcription factor regulating expression of many cytoprotective genes. As part of the CUL3(KBTBD6/7) E3 ubiquitin ligase complex functions mediates 'Lys-48' ubiquitination and proteasomal degradation of TIAM1. By controlling the ubiquitination of that RAC1 guanine exchange factors (GEF), regulates RAC1 signal transduction and downstream biological processes including the organization of the cytoskeleton, cell migration and cell proliferation. The BCR(KBTBD4) E3 ubiquitin ligase complex targets CoREST corepressor complex components RCOR1, KDM1A/LSD1 and HDAC2 for proteasomal degradation with RCOR1 likely to be the primary target while degradation of KDM1A and HDAC2 is likely due to their association with RCOR1. It also targets RCOR3, MIER2 and MIER3 for proteasomal degradation as well as associated proteins ZNF217 and RREB1 with degradation being dependent on the presence of an ELM2 domain in the target proteins. The BCR(ARMC5) complex mediates premature transcription termination of transcripts that are unfavorably configured for transcriptional elongation by mediating ubiquitination of Pol II subunit POLR2A. Required for 'Lys-63'-linked ubiquitination of large ribosomal subunit protein MRPL12. The sequence is that of Cullin-3 (Cul3) from Mus musculus (Mouse).